The sequence spans 407 residues: tRNA (guanine-N(7)-)-methyltransferase non-catalytic subunit wuho (407 aa).

WD repeat units lie at residues 83–124 (AIEV…ARLL), 171–210 (GHLS…DIHS), and 214–252 (GHKE…ELLI).

Belongs to the WD repeat TRM82 family. As to quaternary structure, forms a heterodimer with the catalytic subunit Mettl1. Interacts with mei-P26 and weakly interacts with bgcn; required for the function or formation of the mei-P26-bgcn-bam-sxl complex. Interacts with nanos; may be involved in mei-P26-dependent derepression of the BMP signaling pathway. Interacts with Myc; the interaction may be mediated by mei-P26 and may be involved in the regulation of ribosome biogenesis. In testis, it is present at high level in hub cells, a niche for germline stem cells of testis. Ubiquitously expressed in all testicular cells throughout spermatogenesis. Ubiquitously expressed in all germline and somatic cells of the ovary.

The protein localises to the nucleus. The protein resides in the cytoplasm. The protein operates within tRNA modification; N(7)-methylguanine-tRNA biosynthesis. Its function is as follows. Required for the Mettl1-dependent formation of N(7)-methylguanine at position 46 (m7G46) in tRNA. In the Mettl1-wuho methyltransferase complex, it is required to stabilize and induce conformational changes of the catalytic subunit. Required for binding of nanos mRNA and repression of translation by the mei-P26-bgcn-bam-sxl complex. May cooperate with mei-P26 and nanos to derepress the BMP signaling pathway. May cooperate with mei-P26 to suppress expression of a subset of microRNAs. May cooperate with mei-P26 to regulate bam expression levels in germline cells during gametogenesis. Required to promote mitosis to meiosis transition during gametogenesis. May regulate germline cell division in part by regulating ribosome biogenesis. The polypeptide is tRNA (guanine-N(7)-)-methyltransferase non-catalytic subunit wuho (Drosophila ananassae (Fruit fly)).